Here is a 468-residue protein sequence, read N- to C-terminus: Phosphomethylpyrimidine synthase (468 aa).

Residues Asn-82, Met-111, Tyr-141, His-177, 197 to 199 (SRG), 238 to 241 (DSLR), and Glu-277 contribute to the substrate site. His-281 lines the Zn(2+) pocket. Residue Tyr-304 coordinates substrate. His-345 is a Zn(2+) binding site. Cys-425, Cys-428, and Cys-433 together coordinate [4Fe-4S] cluster.

This sequence belongs to the ThiC family. It depends on [4Fe-4S] cluster as a cofactor.

It catalyses the reaction 5-amino-1-(5-phospho-beta-D-ribosyl)imidazole + S-adenosyl-L-methionine = 4-amino-2-methyl-5-(phosphooxymethyl)pyrimidine + CO + 5'-deoxyadenosine + formate + L-methionine + 3 H(+). Its pathway is cofactor biosynthesis; thiamine diphosphate biosynthesis. Its function is as follows. Catalyzes the synthesis of the hydroxymethylpyrimidine phosphate (HMP-P) moiety of thiamine from aminoimidazole ribotide (AIR) in a radical S-adenosyl-L-methionine (SAM)-dependent reaction. The chain is Phosphomethylpyrimidine synthase from Prochlorococcus marinus (strain SARG / CCMP1375 / SS120).